The primary structure comprises 157 residues: Large ribosomal subunit protein eL24 (157 aa).

The segment at N95 to R157 is disordered. Over residues Q96–K117 the composition is skewed to basic and acidic residues. The segment covering K123–P145 has biased composition (low complexity).

It belongs to the eukaryotic ribosomal protein eL24 family. Component of the large ribosomal subunit.

The protein resides in the cytoplasm. Component of the large ribosomal subunit. The ribosome is a large ribonucleoprotein complex responsible for the synthesis of proteins in the cell. Plays an essential role in early embryonic development. This is Large ribosomal subunit protein eL24 (rpl24) from Danio rerio (Zebrafish).